A 334-amino-acid polypeptide reads, in one-letter code: MRALRFLIENRNTVFFTLLVALVLSLYLLVYLFSHTPRPPYPEELKYIAIDEKGHEVSRALPNLNEHQDDEEIFLSVVIPSYNETGRILLMLTDAISFLKEKYGSRWEIVIVDDGSTDNTTQYCLKICKEQFKLNYEQFRIIKFSQNRGKGGAVRQGFLHIRGKYGLFADADGASKFSDVEKLIDAISKIETSSTDLKTTKPAVAIGSRAHMVNTEAVIKRSMIRNCLMYGFHTLVFIFGIRSIKDTQCGFKLFNRAAILKIFPYLHTEGWIFDVEILILAIRKRIQIEEIPISWHEVDGSKMALAIDSIKMAKDLVIIRMAYLLGIYRDNKKC.

The Lumenal portion of the chain corresponds to 1–12; sequence MRALRFLIENRN. A helical membrane pass occupies residues 13 to 33; it reads TVFFTLLVALVLSLYLLVYLF. Over 34 to 334 the chain is Cytoplasmic; it reads SHTPRPPYPE…LGIYRDNKKC (301 aa).

This sequence belongs to the glycosyltransferase 2 family.

The protein localises to the endoplasmic reticulum membrane. It catalyses the reaction a di-trans,poly-cis-dolichyl phosphate + UDP-alpha-D-glucose = a di-trans,poly-cis-dolichyl beta-D-glucosyl phosphate + UDP. Its pathway is protein modification; protein glycosylation. Its function is as follows. Endoplasmic reticulum membrane-bound UDP-glucose:dolichyl-phosphate glucosyltransferase involved in protein N-linked glycosylation. The polypeptide is Dolichyl-phosphate beta-glucosyltransferase (Saccharomyces cerevisiae (strain ATCC 204508 / S288c) (Baker's yeast)).